The chain runs to 310 residues: Methionyl-tRNA formyltransferase (310 aa).

109–112 (SLLP) contributes to the (6S)-5,6,7,8-tetrahydrofolate binding site.

The protein belongs to the Fmt family.

The enzyme catalyses L-methionyl-tRNA(fMet) + (6R)-10-formyltetrahydrofolate = N-formyl-L-methionyl-tRNA(fMet) + (6S)-5,6,7,8-tetrahydrofolate + H(+). Its function is as follows. Attaches a formyl group to the free amino group of methionyl-tRNA(fMet). The formyl group appears to play a dual role in the initiator identity of N-formylmethionyl-tRNA by promoting its recognition by IF2 and preventing the misappropriation of this tRNA by the elongation apparatus. The sequence is that of Methionyl-tRNA formyltransferase from Pseudomonas paraeruginosa (strain DSM 24068 / PA7) (Pseudomonas aeruginosa (strain PA7)).